We begin with the raw amino-acid sequence, 117 residues long: Nuclear transition protein 2 (117 aa).

Residues 1–117 are disordered; it reads MDTKMQSLPT…KRRSSGRRYK (117 aa). Positions 7 to 26 are enriched in low complexity; it reads SLPTTHPHPHSSSRPQSHTS. His-12, His-14, His-16, His-24, Cys-32, Cys-34, Cys-38, and Cys-41 together coordinate Zn(2+). Positions 44–53 are enriched in low complexity; sequence AGHAGSSSSP. Composition is skewed to basic residues over residues 60-77 and 93-117; these read KHPK…RPSH and SKRK…RRYK. Residues 90-98 carry the Nuclear localization signal motif; the sequence is GKVSKRKAV. Position 112 is a phosphoserine (Ser-112).

Belongs to the nuclear transition protein 2 family.

The protein resides in the nucleus. It localises to the chromosome. Plays a key role in the replacement of histones to protamine in the elongating spermatids of mammals. In condensing spermatids, loaded onto the nucleosomes, where it promotes the recruitment and processing of protamines, which are responsible for histone eviction. The histone H2AB1-H2BC1/TH2B dimer is required for loading of TNP2 onto chromatin. This Mus musculus (Mouse) protein is Nuclear transition protein 2.